A 317-amino-acid chain; its full sequence is Protein IMPACT-B (317 aa).

The RWD domain occupies 17–118 (EEIEALSSIY…EKIREFLTEK (102 aa)). The tract at residues 296-317 (DSTEETSKAGGKSKKPKSKKTK) is disordered. A compositionally biased stretch (basic residues) spans 306-317 (GKSKKPKSKKTK).

Belongs to the IMPACT family. Interacts with GCN1; prevents the interaction of GCN1 with EIF2AK4/GCN2 and inhibits EIF2AK4/GCN2 kinase activity. Interaction with RPL39; this interaction occurs in a GCN1-independent manner. Associates with ribosomes; this interaction occurs in a GCN1-independent manner. Associates with actin; this interaction occurs in a GCN1-independent manner.

The protein resides in the cytoplasm. Its function is as follows. Translational regulator that ensures constant high levels of translation upon a variety of stress conditions, such as amino acid starvation, UV-C irradiation, proteasome inhibitor treatment and glucose deprivation. Plays a role as a negative regulator of the EIF2AK4/GCN2 kinase activity; impairs GCN1-mediated EIF2AK4/GCN2 activation, and hence EIF2AK4/GCN2-mediated eIF-2-alpha phosphorylation and subsequent down-regulation of protein synthesis. Plays a role in differentiation of neuronal cells by stimulating neurite outgrowth. In Xenopus tropicalis (Western clawed frog), this protein is Protein IMPACT-B (impact-B).